We begin with the raw amino-acid sequence, 578 residues long: Zinc finger-containing ubiquitin peptidase 1 (578 aa).

A C2H2-type 1 zinc finger spans residues 2 to 24 (LSCNICGETVTSEPDMKAHLIVH). The segment at 29–52 (IICPFCKLSGVNYDEMCFHIETAH) adopts a C2H2-type 2; atypical zinc-finger fold. 2 consecutive C2H2-type zinc fingers follow at residues 154–177 (PECPFCGKIEEHSEDMETHVKTKH) and 193–215 (YDCPMCGLICTNYHILQEHVDLH). The tract at residues 226-248 (DRVQCSGDLQLAHQLQQEEDRKR) is MIU. Residues 249 to 274 (RSEESRQEIEEFQKLQRQYGLDNSGG) form a zUBD/ZHA region. N6-acetyllysine is present on Lys262. Cys360 (nucleophile) is an active-site residue. His491 acts as the Proton acceptor in catalysis. The active site involves Asp512.

This sequence belongs to the peptidase C78 family. ZUFSP subfamily. In terms of assembly, interacts with RPA1 and RPA2.

It localises to the cytoplasm. The protein localises to the nucleus. It catalyses the reaction Thiol-dependent hydrolysis of ester, thioester, amide, peptide and isopeptide bonds formed by the C-terminal Gly of ubiquitin (a 76-residue protein attached to proteins as an intracellular targeting signal).. In terms of biological role, deubiquitinase with endodeubiquitinase activity that specifically interacts with and cleaves 'Lys-63'-linked long polyubiquitin chains. Shows only weak activity against 'Lys-11' and 'Lys-48'-linked chains. Plays an important role in genome stability pathways, functioning to prevent spontaneous DNA damage and also promote cellular survival in response to exogenous DNA damage. Modulates the ubiquitination status of replication protein A (RPA) complex proteins in response to replication stress. In Homo sapiens (Human), this protein is Zinc finger-containing ubiquitin peptidase 1.